A 318-amino-acid polypeptide reads, in one-letter code: MMLWQATPASLWQGRDDSAEAPNALRLFQTIVRAERFAPQEMPGDIALLGFACDEGVRRNKGRTGAADGPATLRRALANMASHQGHDRCVDMGTISVDGEQLEAAHQALREAVADCQRVGKRTLVLGGGHETAFGHGAGVLDAFPGEKVGIINLDAHLDLRFADCASSGTPFRQLALECDAQQRGFHYTCIGVSRAANTQALWDEAARRQVAIVEDLEVLTAFETRVLPELERNIAQFDRLYLTIDLDVLPAREMPAVSAPAALGVPLATLLRIVEPLCRNGKLQAVDLVEFNPLFDIDGQGARAAARLAWQIAHWWR.

The Mn(2+) site is built by histidine 130, aspartate 155, histidine 157, aspartate 159, aspartate 246, and aspartate 248.

This sequence belongs to the arginase family. The cofactor is Mn(2+).

It carries out the reaction N-formimidoyl-L-glutamate + H2O = formamide + L-glutamate. It participates in amino-acid degradation; L-histidine degradation into L-glutamate; L-glutamate from N-formimidoyl-L-glutamate (hydrolase route): step 1/1. Its function is as follows. Catalyzes the conversion of N-formimidoyl-L-glutamate to L-glutamate and formamide. The polypeptide is Formimidoylglutamase (Klebsiella pneumoniae subsp. pneumoniae (strain ATCC 700721 / MGH 78578)).